A 272-amino-acid chain; its full sequence is MMIHGFQSSHRDFCFGPWKLTASKTHIMKSADVEKLADELHMPSLPEMMFGDNVLRIQHGSGFGIEFNATDALRCVNNYQGMLKVACAEEWQESRTEGEHSKEVIKPYDWTYTTDYKGTLLGESLKLKVVPTTDHIDTEKLKAREQIKFFEEVLLFEDELHDHGVSSLSVKIRVMPSSFFLLLRFFLRIDGVLIRMNDTRLYHEADKTYMLREYTSRESKISSLMHVPPSLFTEPNEISQYLPIKEAVCEKLIFPERIDPNPADSQKSTQVE.

Lys106 bears the N6-acetyllysine mark. Residues Arg173 to Glu272 form an interaction with PPP2CA region. The residue at position 265 (Ser265) is a Phosphoserine.

Belongs to the TIP41 family. In terms of assembly, isoform 1 interacts with PPP2CA. Isoform 2 does not interact with PPP2CA. Interacts with PPP2CB, PPP4C and PPP6C. Interacts with IGBP1; the interaction is dependent on PPP2CA. Associates with a protein phosphatase 2A PP2A(C):IGBP1 complex. Interacts with PPP4C and PPP4R2.

It localises to the cytoplasm. May be a allosteric regulator of serine/threonine-protein phosphatase 2A (PP2A). Isoform 1 inhibits catalytic activity of the PP2A(D) core complex in vitro. The PP2A(C):TIPRL complex does not show phosphatase activity. Acts as a negative regulator of serine/threonine-protein phosphatase 4 probably by inhibiting the formation of the active PPP4C:PPP4R2 complex; the function is proposed to implicate it in DNA damage response by promoting H2AX phosphorylated on Ser-140 (gamma-H2AX). May play a role in the regulation of ATM/ATR signaling pathway controlling DNA replication and repair. This chain is TIP41-like protein (TIPRL), found in Homo sapiens (Human).